A 345-amino-acid polypeptide reads, in one-letter code: Adenine deaminase (345 aa).

The Zn(2+) site is built by histidine 20, histidine 22, and histidine 204. The Proton donor role is filled by glutamate 207. A Zn(2+)-binding site is contributed by aspartate 285. Aspartate 286 serves as a coordination point for substrate.

Belongs to the metallo-dependent hydrolases superfamily. Adenosine and AMP deaminases family. Adenine deaminase type 2 subfamily. Zn(2+) serves as cofactor.

The enzyme catalyses adenine + H2O + H(+) = hypoxanthine + NH4(+). In terms of biological role, catalyzes the hydrolytic deamination of adenine to hypoxanthine. Plays an important role in the purine salvage pathway and in nitrogen catabolism. The polypeptide is Adenine deaminase (Ralstonia nicotianae (strain ATCC BAA-1114 / GMI1000) (Ralstonia solanacearum)).